Consider the following 410-residue polypeptide: Peptidase T (410 aa).

H78 is a Zn(2+) binding site. Residue D80 is part of the active site. D140 contacts Zn(2+). The active-site Proton acceptor is E174. Residues E175, D197, and H379 each contribute to the Zn(2+) site.

The protein belongs to the peptidase M20B family. Requires Zn(2+) as cofactor.

It localises to the cytoplasm. The catalysed reaction is Release of the N-terminal residue from a tripeptide.. Functionally, cleaves the N-terminal amino acid of tripeptides. The polypeptide is Peptidase T (Vibrio cholerae serotype O1 (strain ATCC 39315 / El Tor Inaba N16961)).